A 159-amino-acid chain; its full sequence is Eukaryotic translation initiation factor 5A-5 (159 aa).

The span at 1 to 12 shows a compositional bias: basic and acidic residues; it reads MSDEEHHFESKA. The interval 1 to 23 is disordered; the sequence is MSDEEHHFESKADAGASKTYPQQ. Lysine 52 carries the post-translational modification Hypusine.

It belongs to the eIF-5A family. In terms of processing, lys-52 undergoes hypusination, a unique post-translational modification that consists in the addition of a butylamino group from spermidine to lysine side chain, leading to the formation of the unusual amino acid hypusine. eIF-5As are the only known proteins to undergo this modification, which is essential for their function.

In terms of biological role, translation factor that promotes translation elongation and termination, particularly upon ribosome stalling at specific amino acid sequence contexts. Binds between the exit (E) and peptidyl (P) site of the ribosome and promotes rescue of stalled ribosome: specifically required for efficient translation of polyproline-containing peptides as well as other motifs that stall the ribosome. Acts as a ribosome quality control (RQC) cofactor by joining the RQC complex to facilitate peptidyl transfer during CAT tailing step. This Solanum tuberosum (Potato) protein is Eukaryotic translation initiation factor 5A-5 (EIF5A5).